The primary structure comprises 946 residues: Aminopeptidase N (946 aa).

Residues 1–15 form the signal peptide; it reads MRLLICLTLLGLVCG. N60 carries an N-linked (GlcNAc...) asparagine glycan. Substrate is bound at residue 308-312; that stretch reads GAMEN. Residue H344 participates in Zn(2+) binding. The active-site Proton acceptor is E345. H348 and E367 together coordinate Zn(2+). Residues N550 and N605 are each glycosylated (N-linked (GlcNAc...) asparagine). Intrachain disulfides connect C715/C722 and C751/C787.

This sequence belongs to the peptidase M1 family. Zn(2+) serves as cofactor.

The protein localises to the cell membrane. The catalysed reaction is Release of an N-terminal amino acid, Xaa-|-Yaa- from a peptide, amide or arylamide. Xaa is preferably Ala, but may be most amino acids including Pro (slow action). When a terminal hydrophobic residue is followed by a prolyl residue, the two may be released as an intact Xaa-Pro dipeptide.. This is Aminopeptidase N (APN1) from Plutella xylostella (Diamondback moth).